A 164-amino-acid polypeptide reads, in one-letter code: Transcription elongation factor GreA (164 aa).

It belongs to the GreA/GreB family.

Functionally, necessary for efficient RNA polymerase transcription elongation past template-encoded arresting sites. The arresting sites in DNA have the property of trapping a certain fraction of elongating RNA polymerases that pass through, resulting in locked ternary complexes. Cleavage of the nascent transcript by cleavage factors such as GreA or GreB allows the resumption of elongation from the new 3'terminus. GreA releases sequences of 2 to 3 nucleotides. This chain is Transcription elongation factor GreA, found in Helicobacter pylori (strain Shi470).